The chain runs to 156 residues: Small ribosomal subunit protein uS7 (156 aa).

The protein belongs to the universal ribosomal protein uS7 family. As to quaternary structure, part of the 30S ribosomal subunit. Contacts proteins S9 and S11.

Its function is as follows. One of the primary rRNA binding proteins, it binds directly to 16S rRNA where it nucleates assembly of the head domain of the 30S subunit. Is located at the subunit interface close to the decoding center, probably blocks exit of the E-site tRNA. The protein is Small ribosomal subunit protein uS7 of Mycolicibacterium smegmatis (strain ATCC 700084 / mc(2)155) (Mycobacterium smegmatis).